A 1502-amino-acid chain; its full sequence is tRNA (32-2'-O)-methyltransferase regulator trm732 (1502 aa).

It belongs to the THADA family.

Its subcellular location is the cytoplasm. It is found in the nucleus. Together with methyltransferase trm7, methylates the 2'-O-ribose of nucleotides at position 32 of the anticodon loop of substrate tRNAs. The polypeptide is tRNA (32-2'-O)-methyltransferase regulator trm732 (Schizosaccharomyces pombe (strain 972 / ATCC 24843) (Fission yeast)).